A 322-amino-acid chain; its full sequence is NADH-cytochrome b5 reductase 2 (322 aa).

Residues 32–48 (LAPIYISVGLAGLGVGL) form a helical membrane-spanning segment. An FAD-binding FR-type domain is found at 72-176 (QGWVDLKLSE…KGPIPKYPWE (105 aa)). 179–214 (KHKHICLIAGGTGITPMYQLARQIFKNPEDQTKVTL) is an FAD binding site.

The protein belongs to the flavoprotein pyridine nucleotide cytochrome reductase family. FAD is required as a cofactor.

It localises to the mitochondrion outer membrane. The enzyme catalyses 2 Fe(III)-[cytochrome b5] + NADH = 2 Fe(II)-[cytochrome b5] + NAD(+) + H(+). In terms of biological role, may mediate the reduction of outer membrane cytochrome b5. This chain is NADH-cytochrome b5 reductase 2 (mcr1), found in Aspergillus clavatus (strain ATCC 1007 / CBS 513.65 / DSM 816 / NCTC 3887 / NRRL 1 / QM 1276 / 107).